The following is a 652-amino-acid chain: Beta-mannosyltransferase 1 (652 aa).

The Cytoplasmic portion of the chain corresponds to 1 to 15 (MVDLFQWLKFYSMRR). The chain crosses the membrane as a helical span at residues 16-34 (LGQVAITLVLLNLFVFLGY). Over 35–652 (KFTPSTVIGS…LYQLQEEERS (618 aa)) the chain is Extracellular. The N-linked (GlcNAc...) asparagine glycan is linked to asparagine 57. A coiled-coil region spans residues 535–652 (PARYAKQMEN…LYQLQEEERS (118 aa)). Positions 536–621 (ARYAKQMENE…EAKENEAKKK (86 aa)) are disordered.

It belongs to the BMT family.

Its subcellular location is the membrane. Functionally, beta-mannosyltransferase involved in cell wall biosynthesis. Involved in the beta-mannosylation of outer chains of N-glycans. The protein is Beta-mannosyltransferase 1 (BMT1) of Komagataella phaffii (strain ATCC 76273 / CBS 7435 / CECT 11047 / NRRL Y-11430 / Wegner 21-1) (Yeast).